Consider the following 378-residue polypeptide: Putative F-box/kelch-repeat protein At3g43710 (378 aa).

The F-box domain maps to 23–69 (TFGIEMLPDDLVLSCLARVPRMYYPILSLVSKRFRSFLTSTELYQTR). Kelch repeat units lie at residues 130–176 (NIYV…VLDG), 178–227 (IYVA…GYDG), and 262–308 (SQCV…VPTK).

This chain is Putative F-box/kelch-repeat protein At3g43710, found in Arabidopsis thaliana (Mouse-ear cress).